Reading from the N-terminus, the 532-residue chain is ATP synthase subunit alpha (532 aa).

171-178 (GDRQTGKT) is a binding site for ATP.

Belongs to the ATPase alpha/beta chains family. As to quaternary structure, F-type ATPases have 2 components, CF(1) - the catalytic core - and CF(0) - the membrane proton channel. CF(1) has five subunits: alpha(3), beta(3), gamma(1), delta(1), epsilon(1). CF(0) has three main subunits: a(1), b(2) and c(9-12). The alpha and beta chains form an alternating ring which encloses part of the gamma chain. CF(1) is attached to CF(0) by a central stalk formed by the gamma and epsilon chains, while a peripheral stalk is formed by the delta and b chains.

The protein resides in the cell membrane. It carries out the reaction ATP + H2O + 4 H(+)(in) = ADP + phosphate + 5 H(+)(out). Produces ATP from ADP in the presence of a proton gradient across the membrane. The alpha chain is a regulatory subunit. The polypeptide is ATP synthase subunit alpha (Amoebophilus asiaticus (strain 5a2)).